The chain runs to 185 residues: Protein GrpE (185 aa).

A disordered region spans residues 1–37 (MSEEKQTPEQEAEVEAQEEAVQADTEEVTQDEQSAFQ).

The protein belongs to the GrpE family. As to quaternary structure, homodimer.

It localises to the cytoplasm. Functionally, participates actively in the response to hyperosmotic and heat shock by preventing the aggregation of stress-denatured proteins, in association with DnaK and GrpE. It is the nucleotide exchange factor for DnaK and may function as a thermosensor. Unfolded proteins bind initially to DnaJ; upon interaction with the DnaJ-bound protein, DnaK hydrolyzes its bound ATP, resulting in the formation of a stable complex. GrpE releases ADP from DnaK; ATP binding to DnaK triggers the release of the substrate protein, thus completing the reaction cycle. Several rounds of ATP-dependent interactions between DnaJ, DnaK and GrpE are required for fully efficient folding. The chain is Protein GrpE from Bacillus pumilus (strain SAFR-032).